The following is a 288-amino-acid chain: Acetyl-coenzyme A carboxylase carboxyl transferase subunit beta (288 aa).

The 259-residue stretch at 30–288 folds into the CoA carboxyltransferase N-terminal domain; that stretch reads IMTKCPKCKK…KLHQEVKKDA (259 aa). 4 residues coordinate Zn(2+): C34, C37, C53, and C56. The C4-type zinc-finger motif lies at 34 to 56; it reads CPKCKKIMYTKELNENLNVCFNC.

It belongs to the AccD/PCCB family. In terms of assembly, acetyl-CoA carboxylase is a heterohexamer composed of biotin carboxyl carrier protein (AccB), biotin carboxylase (AccC) and two subunits each of ACCase subunit alpha (AccA) and ACCase subunit beta (AccD). Zn(2+) serves as cofactor.

It localises to the cytoplasm. The enzyme catalyses N(6)-carboxybiotinyl-L-lysyl-[protein] + acetyl-CoA = N(6)-biotinyl-L-lysyl-[protein] + malonyl-CoA. It functions in the pathway lipid metabolism; malonyl-CoA biosynthesis; malonyl-CoA from acetyl-CoA: step 1/1. Functionally, component of the acetyl coenzyme A carboxylase (ACC) complex. Biotin carboxylase (BC) catalyzes the carboxylation of biotin on its carrier protein (BCCP) and then the CO(2) group is transferred by the transcarboxylase to acetyl-CoA to form malonyl-CoA. The polypeptide is Acetyl-coenzyme A carboxylase carboxyl transferase subunit beta (Staphylococcus haemolyticus (strain JCSC1435)).